Reading from the N-terminus, the 486-residue chain is Siroheme synthase (486 aa).

The precorrin-2 dehydrogenase /sirohydrochlorin ferrochelatase stretch occupies residues 1–204; that stretch reads MNYLPIFVDL…HQIEQAEALV (204 aa). Residues 22–23 and 43–44 each bind NAD(+); these read HV and EK. Phosphoserine is present on Ser-128. Positions 216–486 are uroporphyrinogen-III C-methyltransferase; it reads GEVSLVGAGP…NKETHWKQAA (271 aa). Pro-225 serves as a coordination point for S-adenosyl-L-methionine. Asp-248 functions as the Proton acceptor in the catalytic mechanism. The active-site Proton donor is Lys-270. Residues 301–303, Val-306, 331–332, Met-383, and Gly-412 contribute to the S-adenosyl-L-methionine site; these read GGD and TA.

This sequence in the N-terminal section; belongs to the precorrin-2 dehydrogenase / sirohydrochlorin ferrochelatase family. In the C-terminal section; belongs to the precorrin methyltransferase family.

It carries out the reaction uroporphyrinogen III + 2 S-adenosyl-L-methionine = precorrin-2 + 2 S-adenosyl-L-homocysteine + H(+). It catalyses the reaction precorrin-2 + NAD(+) = sirohydrochlorin + NADH + 2 H(+). The catalysed reaction is siroheme + 2 H(+) = sirohydrochlorin + Fe(2+). It functions in the pathway cofactor biosynthesis; adenosylcobalamin biosynthesis; precorrin-2 from uroporphyrinogen III: step 1/1. Its pathway is cofactor biosynthesis; adenosylcobalamin biosynthesis; sirohydrochlorin from precorrin-2: step 1/1. It participates in porphyrin-containing compound metabolism; siroheme biosynthesis; precorrin-2 from uroporphyrinogen III: step 1/1. The protein operates within porphyrin-containing compound metabolism; siroheme biosynthesis; siroheme from sirohydrochlorin: step 1/1. It functions in the pathway porphyrin-containing compound metabolism; siroheme biosynthesis; sirohydrochlorin from precorrin-2: step 1/1. Multifunctional enzyme that catalyzes the SAM-dependent methylations of uroporphyrinogen III at position C-2 and C-7 to form precorrin-2 via precorrin-1. Then it catalyzes the NAD-dependent ring dehydrogenation of precorrin-2 to yield sirohydrochlorin. Finally, it catalyzes the ferrochelation of sirohydrochlorin to yield siroheme. This chain is Siroheme synthase, found in Actinobacillus pleuropneumoniae serotype 7 (strain AP76).